We begin with the raw amino-acid sequence, 222 residues long: Ras-related protein Rab11C (222 aa).

GTP is bound at residue 22–29 (GDSAVGKT). Positions 44 to 52 (SKATIGVEF) match the Effector region motif. Residues 70–74 (DTAGQ) and 128–131 (NKTD) contribute to the GTP site. Residues Cys219 and Cys220 are each lipidated (S-geranylgeranyl cysteine).

The protein belongs to the small GTPase superfamily. Rab family.

The protein localises to the cell membrane. The sequence is that of Ras-related protein Rab11C (RAB11C) from Nicotiana tabacum (Common tobacco).